The primary structure comprises 63 residues: MNAVDLRAKSVEELNAELVSLLREQFNLRMQAATGQLQQTHNLKAVRRDIARVKTVLTEKAGA.

Belongs to the universal ribosomal protein uL29 family.

In Photobacterium profundum (strain SS9), this protein is Large ribosomal subunit protein uL29.